The sequence spans 896 residues: Protein translocase subunit SecA (896 aa).

ATP-binding positions include glutamine 87, 105–109 (GEGKT), and aspartate 507. The segment at 853–879 (ESLSENDEASETQTFRRQEKKIGRNDP) is disordered. Positions 866–876 (TFRRQEKKIGR) are enriched in basic and acidic residues. Zn(2+) is bound by residues cysteine 880, cysteine 882, cysteine 891, and histidine 892.

This sequence belongs to the SecA family. In terms of assembly, monomer and homodimer. Part of the essential Sec protein translocation apparatus which comprises SecA, SecYEG and auxiliary proteins SecDF-YajC and YidC. Zn(2+) serves as cofactor.

It is found in the cell inner membrane. The protein localises to the cytoplasm. The catalysed reaction is ATP + H2O + cellular proteinSide 1 = ADP + phosphate + cellular proteinSide 2.. Functionally, part of the Sec protein translocase complex. Interacts with the SecYEG preprotein conducting channel. Has a central role in coupling the hydrolysis of ATP to the transfer of proteins into and across the cell membrane, serving both as a receptor for the preprotein-SecB complex and as an ATP-driven molecular motor driving the stepwise translocation of polypeptide chains across the membrane. In Legionella pneumophila (strain Corby), this protein is Protein translocase subunit SecA.